A 184-amino-acid polypeptide reads, in one-letter code: MKNITDSFVSLGHWSSAGSFGFNTDILATNPINLSVVLGVLIFFGKGVLSDLLDNRKQRILNTIRNSEELRGGAIEQLEKARARLRKVEIEADQFRVNGYSEIEREKLNLINSTYKTLEQLENYKNETIHFEQQRAINQVRQRVFQQALQGALGTLNSCLTNELHLRTISANIGMFGAMKEITN.

Residues Leu-27 to Leu-49 form a helical membrane-spanning segment.

The protein belongs to the ATPase B chain family. As to quaternary structure, F-type ATPases have 2 components, F(1) - the catalytic core - and F(0) - the membrane proton channel. F(1) has five subunits: alpha(3), beta(3), gamma(1), delta(1), epsilon(1). F(0) has four main subunits: a(1), b(1), b'(1) and c(10-14). The alpha and beta chains form an alternating ring which encloses part of the gamma chain. F(1) is attached to F(0) by a central stalk formed by the gamma and epsilon chains, while a peripheral stalk is formed by the delta, b and b' chains.

The protein resides in the plastid. It is found in the chloroplast thylakoid membrane. Its function is as follows. F(1)F(0) ATP synthase produces ATP from ADP in the presence of a proton or sodium gradient. F-type ATPases consist of two structural domains, F(1) containing the extramembraneous catalytic core and F(0) containing the membrane proton channel, linked together by a central stalk and a peripheral stalk. During catalysis, ATP synthesis in the catalytic domain of F(1) is coupled via a rotary mechanism of the central stalk subunits to proton translocation. In terms of biological role, component of the F(0) channel, it forms part of the peripheral stalk, linking F(1) to F(0). In Populus alba (White poplar), this protein is ATP synthase subunit b, chloroplastic.